Consider the following 503-residue polypeptide: Poxin-Schlafen (503 aa).

The active-site Proton donor is His-15. The active-site Shared with catalytic histidine of dimeric partner is the Tyr-136. Catalysis depends on Lys-140, which acts as the Proton acceptor; shared with catalytic histidine of dimeric partner.

This sequence in the N-terminal section; belongs to the poxin family. In the C-terminal section; belongs to the Schlafen protein family. Subgroup poxviridae B3 subfamily. In terms of assembly, homodimer.

The catalysed reaction is 2',3'-cGAMP + H2O = Gp(2'-5')Ap(3') + H(+). Functionally, nuclease that is responsible for viral evasion of host cGAS-STING innate immunity. Cleaves 2',3'-cGAMP which is produced by host cGAS following recognition of cytosolic DNA and blocks the subsequent 2',3'-cGAMP-mediated activation of TMEM173/STING, which normally spreads to adjacent cells and activates the interferon and NF-kappa-B immune responses. This Cynomys gunnisoni (Gunnison's prairie dog) protein is Poxin-Schlafen (OPG188).